The following is a 218-amino-acid chain: Cytochrome b6 (218 aa).

The helical transmembrane segment at 35–55 (IFYCLGGITLVCFLIQFATGF) threads the bilayer. Residue cysteine 38 participates in heme c binding. Positions 89 and 103 each coordinate heme b. The next 3 helical transmembrane spans lie at 93–113 (ASMM…TGGF), 119–139 (LTWI…VTGY), and 189–209 (LHTF…FLMI). 2 residues coordinate heme b: histidine 190 and histidine 205.

This sequence belongs to the cytochrome b family. PetB subfamily. The 4 large subunits of the cytochrome b6-f complex are cytochrome b6, subunit IV (17 kDa polypeptide, PetD), cytochrome f and the Rieske protein, while the 4 small subunits are PetG, PetL, PetM and PetN. The complex functions as a dimer. It depends on heme b as a cofactor. Heme c is required as a cofactor.

The protein localises to the cellular thylakoid membrane. Functionally, component of the cytochrome b6-f complex, which mediates electron transfer between photosystem II (PSII) and photosystem I (PSI), cyclic electron flow around PSI, and state transitions. This Prochlorococcus marinus (strain NATL1A) protein is Cytochrome b6.